The following is a 389-amino-acid chain: snRNA-activating protein complex subunit 1 (389 aa).

Residues 1-15 show a composition bias toward low complexity; sequence MGTPAGAGTRPTGAG. 3 disordered regions span residues 1–22, 245–276, and 290–389; these read MGTP…GVGI, WHKE…ERCE, and SAVV…KRKC. An SNAPC3-binding region spans residues 20 to 187; that stretch reads VGIPPGLQTD…QKFKDPNDRV (168 aa). The interval 183–287 is SNAPC4-binding; the sequence is PNDRVMKLIT…AVSLAKIKAK (105 aa). Residues 245–262 are compositionally biased toward basic and acidic residues; sequence WHKERKNPSLKPKLKDGE. Ser308 and Ser309 each carry phosphoserine.

As to quaternary structure, part of the SNAPc complex composed of 5 subunits: SNAPC1, SNAPC2, SNAPC3, SNAPC4 and SNAPC5. SNAPC1 interacts with SNAPC3, SNAPC4 and TBP.

Its subcellular location is the nucleus. Functionally, part of the SNAPc complex required for the transcription of both RNA polymerase II and III small-nuclear RNA genes. Binds to the proximal sequence element (PSE), a non-TATA-box basal promoter element common to these 2 types of genes. Recruits TBP and BRF2 to the U6 snRNA TATA box. The protein is snRNA-activating protein complex subunit 1 (Snapc1) of Mus musculus (Mouse).